Here is a 1804-residue protein sequence, read N- to C-terminus: Collagen alpha-1(XI) chain (1804 aa).

The signal sequence occupies residues 1–34; that stretch reads MEPWSRWKTKRWIWDLTISTLVLTFLFQAREVRG. Residues 35–511 constitute a propeptide, N-terminal propeptide; that stretch reads AAPVDILKAL…SKGPTISAQE (477 aa). Cystine bridges form between cysteine 60/cysteine 242 and cysteine 181/cysteine 235. The Laminin G-like domain occupies 70–242; that stretch reads DIAYRVTEEA…DYCDHYSPDC (173 aa). The tract at residues 229–417 is nonhelical region; it reads KAAYDYCDHY…DFTETSINGH (189 aa). Asparagine 351 carries an N-linked (GlcNAc...) asparagine glycan. The triple-helical region (interrupted) stretch occupies residues 418–506; it reads GAYGEKGQKG…YGGDGSKGPT (89 aa). Positions 437–506 are disordered; the sequence is LVEGPPGPAG…YGGDGSKGPT (70 aa). Residues 440–488 form the Collagen-like 1 domain; sequence GPPGPAGPAGLMGPPGLQGPSGLPGDPGDRGPPGRPGLPGADGLPGPPG. Composition is skewed to low complexity over residues 447 to 465 and 477 to 494; these read PAGL…LPGD and LPGA…LMLP. The tract at residues 507-509 is short nonhelical segment; it reads ISA. Residues 510 to 527 form a telopeptide region; it reads QEAQAQAILQQARIALRG. The segment at 526–1560 is disordered; the sequence is RGPPGPMGLT…KTRRHTESIQ (1035 aa). Positions 528 to 1540 are triple-helical region; it reads PPGPMGLTGR…PGPPGPPGEV (1013 aa). Collagen-like domains are found at residues 530–584, 581–639, 607–664, and 641–698; these read GPMG…GADG, GADG…EIGP, PGDK…PGQP, and GLPG…GPQG. Gly residues-rich tracts occupy residues 539–548 and 581–590; these read GPVGGPGSAG and GADGGRGMPG. Allysine is present on lysine 610. Residues 639–655 show a composition bias toward low complexity; sequence PRGLPGEAGPRGLLGPR. Residues 697–708 are compositionally biased toward pro residues; sequence QGLPGPQGPIGP. A compositionally biased stretch (low complexity) spans 715 to 726; that stretch reads QGKPGLAGLPGA. One can recognise a Collagen-like 6 domain in the interval 746–804; it reads GPPGPQGPIGYPGPRGVKGADGVRGLKGSKGEKGEDGFPGFKGDMGLKGDRGEVGQVGP. Residues 805–814 are compositionally biased toward basic and acidic residues; sequence RGEDGPEGPK. Low complexity-rich tracts occupy residues 873–901, 916–925, and 969–979; these read KPGP…PGPK, RGPQGPQGPV, and PQGPTGETGPI. The segment covering 1040 to 1049 has biased composition (gly residues); sequence GLKGGEGPQG. A compositionally biased stretch (pro residues) spans 1074–1083; sequence RPGPQGPPGP. The segment covering 1084–1108 has biased composition (low complexity); that stretch reads AGEKGAPGEKGPQGPAGRDGVQGPV. The span at 1160-1169 shows a compositional bias: gly residues; that stretch reads GIAGGDGEAG. Composition is skewed to pro residues over residues 1216-1227 and 1341-1360; these read MGPPGPPGPRGP and QPGP…PGKR. Low complexity-rich tracts occupy residues 1383–1392 and 1417–1426; these read AEGPPGKTGP and QGLPGAAGQD. Collagen-like domains are found at residues 1391-1449, 1442-1492, and 1481-1539; these read GPVG…SKGE, GDPG…PGPA, and GAKG…PPGE. The segment covering 1428-1437 has biased composition (pro residues); that stretch reads PPGPLGPPGL. Lysine 1450 bears the Allysine mark. Over residues 1453–1462 the composition is skewed to low complexity; the sequence is PGLIGLIGPP. Gly residues predominate over residues 1481-1490; sequence GAKGDGGIPG. A compositionally biased stretch (pro residues) spans 1491-1507; the sequence is PAGPIGPPGPPGLPGPA. Low complexity predominate over residues 1509–1519; sequence PKGNKGSSGPT. Pro residues predominate over residues 1528–1537; the sequence is PGPPGPPGPP. The tract at residues 1541–1561 is nonhelical region (C-terminal); the sequence is IQPLPILSPKKTRRHTESIQA. A propeptide spans 1562 to 1804 (C-terminal propeptide); sequence DAGDNILDYS…FEVGPACFLG (243 aa). Residues 1575 to 1803 form the Fibrillar collagen NC1 domain; that stretch reads EEIFGSLNSL…GFEVGPACFL (229 aa). Cysteine 1605 and cysteine 1637 are oxidised to a cystine. Aspartate 1623, asparagine 1625, glutamine 1626, cysteine 1628, and aspartate 1631 together coordinate Ca(2+). 2 N-linked (GlcNAc...) asparagine glycosylation sites follow: asparagine 1638 and asparagine 1707. Intrachain disulfides connect cysteine 1646/cysteine 1801 and cysteine 1712/cysteine 1755.

It belongs to the fibrillar collagen family. Trimers composed of three different chains: alpha 1(XI), alpha 2(XI), and alpha 3(XI). Alpha 3(XI) is probably a post-translational modification of alpha 1(II). Prolines at the third position of the tripeptide repeating unit (G-X-Y) are hydroxylated in some or all of the chains. Post-translationally, N-glycosylated.

Its subcellular location is the secreted. The protein resides in the extracellular space. It is found in the extracellular matrix. Functionally, may play an important role in fibrillogenesis by controlling lateral growth of collagen II fibrils. This chain is Collagen alpha-1(XI) chain (Col11a1), found in Rattus norvegicus (Rat).